A 119-amino-acid polypeptide reads, in one-letter code: Flagellar transcriptional regulator FlhD (119 aa).

The protein belongs to the FlhD family. In terms of assembly, homodimer; disulfide-linked. Forms a heterohexamer composed of two FlhC and four FlhD subunits. Each FlhC binds a FlhD dimer, forming a heterotrimer, and a hexamer assembles by dimerization of two heterotrimers.

It localises to the cytoplasm. Its function is as follows. Functions in complex with FlhC as a master transcriptional regulator that regulates transcription of several flagellar and non-flagellar operons by binding to their promoter region. Activates expression of class 2 flagellar genes, including fliA, which is a flagellum-specific sigma factor that turns on the class 3 genes. Also regulates genes whose products function in a variety of physiological pathways. In Enterobacter sp. (strain 638), this protein is Flagellar transcriptional regulator FlhD.